We begin with the raw amino-acid sequence, 168 residues long: Protein C2-DOMAIN ABA-RELATED 1 (168 aa).

Met1 bears the N-acetylmethionine mark. The region spanning 1–104 is the C2 domain; sequence MENLVGLLRI…EAIKFAHQLG (104 aa). 7 residues coordinate Ca(2+): Arg21, Asp22, Asp27, Asp73, Tyr74, Asp75, and Asp81.

The protein belongs to the plant CAR protein family. In terms of assembly, dimers and oligomers. Binds to PYR/PYL/RCAR abscisic acid intracellular receptors in an ABA-independent manner, both at the plasma membrane and in the nucleus. Interacts directly with PYR1, PYL1, PYL4, PYL6 and PYL8. Binds phospholipids in a Ca(2+)-dependent manner. The cofactor is Ca(2+). Expressed in roots.

It is found in the cell membrane. The protein localises to the nucleus. In terms of biological role, stimulates the GTPase/ATPase activities of Obg-like ATPases. Mediates the transient calcium-dependent interaction of PYR/PYL/RCAR abscisic acid (ABA) receptors with the plasma membrane and thus regulates ABA sensitivity. Binds liposomes in the absence of exogenous Ca(2+), but this activity is enhanced in the presence of Ca(2+) and generates membrane curvature. The sequence is that of Protein C2-DOMAIN ABA-RELATED 1 from Arabidopsis thaliana (Mouse-ear cress).